The chain runs to 212 residues: Thymidylate kinase (212 aa).

Position 10–17 (G10–T17) interacts with ATP.

This sequence belongs to the thymidylate kinase family.

The catalysed reaction is dTMP + ATP = dTDP + ADP. Its function is as follows. Phosphorylation of dTMP to form dTDP in both de novo and salvage pathways of dTTP synthesis. In Serratia proteamaculans (strain 568), this protein is Thymidylate kinase.